The chain runs to 420 residues: 3-phosphoshikimate 1-carboxyvinyltransferase (420 aa).

Residues lysine 26, serine 27, and arginine 31 each coordinate 3-phosphoshikimate. A phosphoenolpyruvate-binding site is contributed by lysine 26. Positions 97 and 125 each coordinate phosphoenolpyruvate. Positions 170, 171, 172, 297, 320, and 324 each coordinate 3-phosphoshikimate. Glutamine 172 serves as a coordination point for phosphoenolpyruvate. The active-site Proton acceptor is aspartate 297. The phosphoenolpyruvate site is built by arginine 328, arginine 375, and lysine 400.

Belongs to the EPSP synthase family. Monomer.

Its subcellular location is the cytoplasm. The catalysed reaction is 3-phosphoshikimate + phosphoenolpyruvate = 5-O-(1-carboxyvinyl)-3-phosphoshikimate + phosphate. Its pathway is metabolic intermediate biosynthesis; chorismate biosynthesis; chorismate from D-erythrose 4-phosphate and phosphoenolpyruvate: step 6/7. Functionally, catalyzes the transfer of the enolpyruvyl moiety of phosphoenolpyruvate (PEP) to the 5-hydroxyl of shikimate-3-phosphate (S3P) to produce enolpyruvyl shikimate-3-phosphate and inorganic phosphate. This chain is 3-phosphoshikimate 1-carboxyvinyltransferase, found in Rhizobium leguminosarum bv. trifolii (strain WSM2304).